The following is a 217-amino-acid chain: 3,4-dihydroxy-2-butanone 4-phosphate synthase (217 aa).

D-ribulose 5-phosphate-binding positions include Arg37–Glu38, Asp42, Arg150–Thr154, and Glu174. Glu38 contacts Mg(2+). Position 153 (His153) interacts with Mg(2+).

It belongs to the DHBP synthase family. In terms of assembly, homodimer. Requires Mg(2+) as cofactor. The cofactor is Mn(2+).

It catalyses the reaction D-ribulose 5-phosphate = (2S)-2-hydroxy-3-oxobutyl phosphate + formate + H(+). It participates in cofactor biosynthesis; riboflavin biosynthesis; 2-hydroxy-3-oxobutyl phosphate from D-ribulose 5-phosphate: step 1/1. In terms of biological role, catalyzes the conversion of D-ribulose 5-phosphate to formate and 3,4-dihydroxy-2-butanone 4-phosphate. The chain is 3,4-dihydroxy-2-butanone 4-phosphate synthase from Pectobacterium carotovorum subsp. carotovorum (strain PC1).